Consider the following 339-residue polypeptide: Heat-inducible transcription repressor HrcA (339 aa).

The protein belongs to the HrcA family.

Its function is as follows. Negative regulator of class I heat shock genes (grpE-dnaK-dnaJ and groELS operons). Prevents heat-shock induction of these operons. This is Heat-inducible transcription repressor HrcA from Methylobacillus flagellatus (strain ATCC 51484 / DSM 6875 / VKM B-1610 / KT).